We begin with the raw amino-acid sequence, 381 residues long: 1-deoxy-D-xylulose 5-phosphate reductoisomerase (381 aa).

NADPH contacts are provided by Thr-10, Gly-11, Ser-12, Ile-13, Gly-36, Lys-37, Asn-38, and Asn-120. Residue Lys-121 coordinates 1-deoxy-D-xylulose 5-phosphate. NADPH is bound at residue Glu-122. Asp-146 lines the Mn(2+) pocket. Positions 147, 148, 172, and 195 each coordinate 1-deoxy-D-xylulose 5-phosphate. Glu-148 is a binding site for Mn(2+). Gly-201 is a binding site for NADPH. 1-deoxy-D-xylulose 5-phosphate contacts are provided by Ser-208, Asn-213, Lys-214, and Glu-217. Position 217 (Glu-217) interacts with Mn(2+).

It belongs to the DXR family. The cofactor is Mg(2+). Mn(2+) is required as a cofactor.

It carries out the reaction 2-C-methyl-D-erythritol 4-phosphate + NADP(+) = 1-deoxy-D-xylulose 5-phosphate + NADPH + H(+). The protein operates within isoprenoid biosynthesis; isopentenyl diphosphate biosynthesis via DXP pathway; isopentenyl diphosphate from 1-deoxy-D-xylulose 5-phosphate: step 1/6. Functionally, catalyzes the NADPH-dependent rearrangement and reduction of 1-deoxy-D-xylulose-5-phosphate (DXP) to 2-C-methyl-D-erythritol 4-phosphate (MEP). This chain is 1-deoxy-D-xylulose 5-phosphate reductoisomerase, found in Lysinibacillus sphaericus (strain C3-41).